A 251-amino-acid chain; its full sequence is 3-deoxy-manno-octulosonate cytidylyltransferase (251 aa).

The protein belongs to the KdsB family.

It is found in the cytoplasm. The enzyme catalyses 3-deoxy-alpha-D-manno-oct-2-ulosonate + CTP = CMP-3-deoxy-beta-D-manno-octulosonate + diphosphate. It participates in nucleotide-sugar biosynthesis; CMP-3-deoxy-D-manno-octulosonate biosynthesis; CMP-3-deoxy-D-manno-octulosonate from 3-deoxy-D-manno-octulosonate and CTP: step 1/1. The protein operates within bacterial outer membrane biogenesis; lipopolysaccharide biosynthesis. Functionally, activates KDO (a required 8-carbon sugar) for incorporation into bacterial lipopolysaccharide in Gram-negative bacteria. In Chlorobium luteolum (strain DSM 273 / BCRC 81028 / 2530) (Pelodictyon luteolum), this protein is 3-deoxy-manno-octulosonate cytidylyltransferase.